Reading from the N-terminus, the 193-residue chain is Ion-translocating oxidoreductase complex subunit A (193 aa).

The next 6 helical transmembrane spans lie at leucine 5–leucine 25, phenylalanine 47–leucine 67, leucine 72–valine 92, leucine 102–leucine 122, alanine 134–isoleucine 154, and alanine 171–valine 191.

This sequence belongs to the NqrDE/RnfAE family. In terms of assembly, the complex is composed of six subunits: RnfA, RnfB, RnfC, RnfD, RnfE and RnfG.

The protein resides in the cell inner membrane. Part of a membrane-bound complex that couples electron transfer with translocation of ions across the membrane. The polypeptide is Ion-translocating oxidoreductase complex subunit A (Cronobacter sakazakii (strain ATCC BAA-894) (Enterobacter sakazakii)).